The following is a 189-amino-acid chain: Chitin synthase 1 (189 aa).

The protein belongs to the chitin synthase family. Class I subfamily.

Its subcellular location is the cell membrane. The catalysed reaction is [(1-&gt;4)-N-acetyl-beta-D-glucosaminyl](n) + UDP-N-acetyl-alpha-D-glucosamine = [(1-&gt;4)-N-acetyl-beta-D-glucosaminyl](n+1) + UDP + H(+). In terms of biological role, polymerizes chitin, a structural polymer of the cell wall and septum, by transferring the sugar moiety of UDP-GlcNAc to the non-reducing end of the growing chitin polymer. This is Chitin synthase 1 (CHS1) from Ajellomyces capsulatus (Darling's disease fungus).